We begin with the raw amino-acid sequence, 66 residues long: Alpha-actitoxin-Ms11a-1 (66 aa).

A signal peptide spans Met1–Ala24. 3 cysteine pairs are disulfide-bonded: Cys26–Cys41, Cys33–Cys46, and Cys40–Cys61.

It localises to the secreted. The protein resides in the nematocyst. Its function is as follows. Alpha-toxins act on postsynaptic membranes, they bind to the nicotinic acetylcholine receptors (nAChR) and thus inhibit them. This toxin competes with alpha-bungarotoxin for binding to orthosteric sites on muscle-type T.carlifornicus (IC(50)=408 nM) and human alpha-7/CHRNA7 nAChRs (IC(50)=14.16 uM). This chain is Alpha-actitoxin-Ms11a-1, found in Metridium senile (Brown sea anemone).